The chain runs to 631 residues: Plastidic ATP/ADP-transporter (631 aa).

11 helical membrane-spanning segments follow: residues 106–126, 149–169, 180–200, 238–258, 271–290, 313–333, 369–389, 407–427, 442–462, 465–485, and 543–563; these read IELV…CILF, IIPF…MLLY, ALFY…GFVL, LFYV…FWGF, FYPL…GRTV, GMMS…WWVN, LATL…TWKS, DFST…QWIF, VLLL…PLAP, AKFG…QNIF, and LASS…AWLG. Residues 586–631 are disordered; that stretch reads ERASLKIPVVSQNENGNGPLSSESSLNPAGGDSTNASSEPSSPRSL. The segment covering 595-631 has biased composition (polar residues); the sequence is VSQNENGNGPLSSESSLNPAGGDSTNASSEPSSPRSL.

It belongs to the ADP/ATP translocase tlc (TC 2.A.12.2) family.

It is found in the plastid. Its subcellular location is the chloroplast membrane. This is Plastidic ATP/ADP-transporter from Solanum tuberosum (Potato).